A 196-amino-acid chain; its full sequence is dTDP-4-dehydro-6-deoxyglucose 3-epimerase (196 aa).

Substrate-binding positions include arginine 21, glutamate 26, 45 to 47, and arginine 57; that span reads QVN. Histidine 60 (proton acceptor) is an active-site residue. Lysine 70 and arginine 117 together coordinate substrate. Residue tyrosine 130 is the Proton donor of the active site. Residues glutamate 141 and arginine 166 each coordinate substrate.

The protein belongs to the dTDP-4-dehydrorhamnose 3,5-epimerase family. Homodimer.

The catalysed reaction is dTDP-4-dehydro-6-deoxy-alpha-D-glucose = dTDP-4-dehydro-6-deoxy-alpha-D-allose. The protein operates within antibiotic biosynthesis. Involved in the biosynthesis of dTDP-6-deoxy-D-allose, an intermediate in the biosynthesis of mycinose, which is one of the two unusual sugars attached to the 16-membered macrolactone ring of the aglycone antibiotic chalcomycin. Catalyzes the conversion of dTDP-4-oxo-6-deoxyglucose to dTDP-4-oxo-6-deoxyallose, via a C-3 epimerization. The protein is dTDP-4-dehydro-6-deoxyglucose 3-epimerase of Streptomyces bikiniensis.